A 187-amino-acid polypeptide reads, in one-letter code: Pterin-4-alpha-carbinolamine dehydratase 2, mitochondrial (187 aa).

The transit peptide at 1–33 directs the protein to the mitochondrion; the sequence is MSRLLLPKLFSISRTQVPAASLFNNLYRRHKRF.

The protein belongs to the pterin-4-alpha-carbinolamine dehydratase family.

The protein resides in the mitochondrion. The enzyme catalyses (4aS,6R)-4a-hydroxy-L-erythro-5,6,7,8-tetrahydrobiopterin = (6R)-L-erythro-6,7-dihydrobiopterin + H2O. Functionally, involved in tetrahydrobiopterin biosynthesis. Possesses pterin-4-alpha-carbinolamine dehydratase activity when expressed in a bacterial heterolgous system. This chain is Pterin-4-alpha-carbinolamine dehydratase 2, mitochondrial, found in Arabidopsis thaliana (Mouse-ear cress).